The following is a 111-amino-acid chain: 4'-hydroxy-3'-methoxypropiophenone carrier protein ppsC (111 aa).

The interval 1–21 is disordered; that stretch reads MSAQVMRPGTPQHEGQEFLSG.

It participates in secondary metabolite biosynthesis. Its function is as follows. 4'-hydroxy-3'-methoxypropiophenone carrier protein; part of the gene cluster that mediates the biosynthesis of 2,4'-dihydroxy-3'-methoxypropiophenone. The first step of the pathway is the conversion of acetate into acetyl-CoA by the acyl-CoA ligase ppsA. Acetyl-CoA is then used as a starter unit by the polyketide synthase ppsB and condensed with 4 malonyl-CoA unit to produce the pentaketide backbone. During polyketide extension, the polykedite chain is probably reduced and dehydrated by the KR and PT domains, respectively. O-methylation seems to be catalyzed by an unknown methyltransferase rather than by the CMeT domain of ppsB. Two hydroxylations and one further decarboxylation step catalyzed by yet unknown enzymes are then required to yield 4'-hydroxy-3'-methoxypropiophenone. PpsC functions as a carrier protein to transport 4'-hydroxy-3'-methoxypropiophenone to a specific cell compartment in which 4'-hydroxy-3'-methoxypropiophenone is hydroxylated to 2,4'-dihydroxy-3'-methoxypropiophenone by a still to be identified enzyme. In Aspergillus oryzae (strain ATCC 42149 / RIB 40) (Yellow koji mold), this protein is 4'-hydroxy-3'-methoxypropiophenone carrier protein ppsC.